A 97-amino-acid polypeptide reads, in one-letter code: Large ribosomal subunit protein uL23 (97 aa).

The protein belongs to the universal ribosomal protein uL23 family. Part of the 50S ribosomal subunit. Contacts protein L29, and trigger factor when it is bound to the ribosome.

In terms of biological role, one of the early assembly proteins it binds 23S rRNA. One of the proteins that surrounds the polypeptide exit tunnel on the outside of the ribosome. Forms the main docking site for trigger factor binding to the ribosome. This chain is Large ribosomal subunit protein uL23, found in Clostridium perfringens (strain SM101 / Type A).